The primary structure comprises 384 residues: tRNA-specific 2-thiouridylase MnmA (384 aa).

ATP is bound by residues 9–16 (GMSGGVDS) and M35. The interval 95–97 (NPD) is interaction with target base in tRNA. Residue C100 is the Nucleophile of the active site. C100 and C196 form a disulfide bridge. G124 is an ATP binding site. Residues 146-148 (KDQ) form an interaction with tRNA region. The Cysteine persulfide intermediate role is filled by C196. The tract at residues 308–309 (RY) is interaction with tRNA.

The protein belongs to the MnmA/TRMU family.

The protein localises to the cytoplasm. The catalysed reaction is S-sulfanyl-L-cysteinyl-[protein] + uridine(34) in tRNA + AH2 + ATP = 2-thiouridine(34) in tRNA + L-cysteinyl-[protein] + A + AMP + diphosphate + H(+). Functionally, catalyzes the 2-thiolation of uridine at the wobble position (U34) of tRNA, leading to the formation of s(2)U34. In Paraburkholderia phymatum (strain DSM 17167 / CIP 108236 / LMG 21445 / STM815) (Burkholderia phymatum), this protein is tRNA-specific 2-thiouridylase MnmA.